Reading from the N-terminus, the 270-residue chain is Feruloyl esterase C (270 aa).

The N-terminal stretch at 1–21 is a signal peptide; it reads MLRAVLLPTLLAFGAFTPVHG.

It belongs to the faeC family.

It localises to the secreted. The enzyme catalyses feruloyl-polysaccharide + H2O = ferulate + polysaccharide.. Involved in degradation of plant cell walls. Hydrolyzes the feruloyl-arabinose ester bond in arabinoxylans, and the feruloyl-galactose ester bond in pectin. Active against paranitrophenyl-acetate, methyl ferulate and wheat arabinoxylan. The protein is Feruloyl esterase C (faeC) of Emericella nidulans (strain FGSC A4 / ATCC 38163 / CBS 112.46 / NRRL 194 / M139) (Aspergillus nidulans).